We begin with the raw amino-acid sequence, 35 residues long: Conotoxin Cal6.1d (35 aa).

Residues 1 to 8 constitute a propeptide that is removed on maturation; sequence GLTRPSKR. Cystine bridges form between Cys9–Cys25, Cys16–Cys29, and Cys24–Cys34.

It belongs to the conotoxin O1 superfamily. In terms of tissue distribution, expressed by the venom duct.

It localises to the secreted. In terms of biological role, probable neurotoxin with unknown target. Possibly targets ion channels. The polypeptide is Conotoxin Cal6.1d (Californiconus californicus (California cone)).